The following is a 203-amino-acid chain: Mitotic spindle checkpoint component mad2 (203 aa).

The HORMA domain occupies Lys13 to Val197.

The protein belongs to the MAD2 family. In terms of assembly, interacts with mad3 and slp1.

Its subcellular location is the nucleus. In terms of biological role, feedback control that prevents cells with incompletely assembled spindles from leaving mitosis. It interacts with the anaphase promoting complex/cyclosome (APC/C) thereby inhibiting APC/C-dependent proteolysis, a step required for exit from mitosis. The protein is Mitotic spindle checkpoint component mad2 of Schizosaccharomyces pombe (strain 972 / ATCC 24843) (Fission yeast).